The sequence spans 463 residues: Cytochrome P450 4d8 (463 aa).

Residues glutamate 267 and cysteine 409 each contribute to the heme site.

The protein belongs to the cytochrome P450 family. It depends on heme as a cofactor.

The protein resides in the endoplasmic reticulum membrane. The protein localises to the microsome membrane. In terms of biological role, may be involved in the metabolism of insect hormones and in the breakdown of synthetic insecticides. The protein is Cytochrome P450 4d8 (Cyp4d8) of Drosophila melanogaster (Fruit fly).